The chain runs to 610 residues: Ubiquilin-like protein (610 aa).

Residues 31–105 (IRVIVKTPGN…IHVVIKSKHG (75 aa)) enclose the Ubiquitin-like domain. The 46-residue stretch at 562 to 607 (QAPEVRFSKEMECLQAMGFVNYNANLQALIATDGDTNAAIYKLKSS) folds into the UBA domain.

In Mus musculus (Mouse), this protein is Ubiquilin-like protein (Ubqlnl).